Here is a 908-residue protein sequence, read N- to C-terminus: NADH-quinone oxidoreductase subunit G (908 aa).

A 2Fe-2S ferredoxin-type domain is found at 2–83 (ATIHVDGKEY…GTFISIDDEE (82 aa)). The [2Fe-2S] cluster site is built by C34, C45, C48, and C67. The region spanning 83 to 122 (EAKQFRESVVEWLMTNHPHDCPVCEEGGNCHLQDMTVMTG) is the 4Fe-4S His(Cys)3-ligated-type domain. [4Fe-4S] cluster is bound by residues H99, C103, C106, C112, C151, C154, C157, C201, C228, C231, C235, and C263. The region spanning 221-277 (MQFAPSICQQCSIGCNISPGERYGELRRIENRYNGTVNHYFLCDRGRFGYGYVNLKD) is the 4Fe-4S Mo/W bis-MGD-type domain.

This sequence belongs to the complex I 75 kDa subunit family. Composed of 13 different subunits. Subunits NuoCD, E, F, and G constitute the peripheral sector of the complex. Requires [2Fe-2S] cluster as cofactor. [4Fe-4S] cluster serves as cofactor.

The catalysed reaction is a quinone + NADH + 5 H(+)(in) = a quinol + NAD(+) + 4 H(+)(out). In terms of biological role, NDH-1 shuttles electrons from NADH, via FMN and iron-sulfur (Fe-S) centers, to quinones in the respiratory chain. The immediate electron acceptor for the enzyme in this species is believed to be ubiquinone. Couples the redox reaction to proton translocation (for every two electrons transferred, four hydrogen ions are translocated across the cytoplasmic membrane), and thus conserves the redox energy in a proton gradient. The chain is NADH-quinone oxidoreductase subunit G (nuoG) from Salmonella typhi.